The sequence spans 198 residues: HTH-type transcriptional repressor DhaR (198 aa).

Positions 4–64 (TPVRQHLVEK…QVLQEFFSDL (61 aa)) constitute an HTH tetR-type domain.

Its function is as follows. Transcriptional repressor for the dhaA haloalkane dehalogenase gene. The protein is HTH-type transcriptional repressor DhaR (dhaR) of Mycobacterium sp. (strain GP1).